The chain runs to 586 residues: NudC domain-containing protein 1 (586 aa).

Residues 259-278 (KDQPESSEDEKMDEDNKREP) form a disordered region. Residues 275 to 364 (KREPLYNWHQ…EPGSTWAELV (90 aa)) enclose the CS domain.

It localises to the cytoplasm. The protein resides in the nucleus. The polypeptide is NudC domain-containing protein 1 (Xenopus tropicalis (Western clawed frog)).